The chain runs to 302 residues: Heat stress transcription factor B-1 (302 aa).

Low complexity predominate over residues 1–15; that stretch reads MAAAEAAAAVGKQQQ. Disordered stretches follow at residues 1-33 and 116-184; these read MAAA…PFLT and GIRR…RKDN. The span at 16–28 shows a compositional bias: gly residues; that stretch reads KGGGGRGGGGGGP. The segment covering 123–133 has biased composition (polar residues); sequence TTPQSSKSCGS. Residues 139 to 150 show a composition bias toward pro residues; it reads FPPPLPPLPPEP. The span at 151–172 shows a compositional bias: low complexity; the sequence is SATTSSGNDRSSSSASSPPRAD. Positions 170 to 202 form a coiled coil; that stretch reads RADITSENEQLRKDNQTLTMELARARRHCEELL. The interval 180-209 is hydrophobic repeat HR-A/B; sequence LRKDNQTLTMELARARRHCEELLGFLSRFL. Positions 211–218 match the Nuclear export signal motif; sequence VRQLDLRL. A Nuclear localization signal motif is present at residues 263-267; it reads RKRAR.

The protein belongs to the HSF family. Class B subfamily. Homotrimer. Exhibits temperature-dependent phosphorylation.

Its subcellular location is the cytoplasm. It is found in the nucleus. Functionally, transcriptional regulator that specifically binds DNA of heat shock promoter elements (HSE). This Oryza sativa subsp. japonica (Rice) protein is Heat stress transcription factor B-1 (HSFB1).